The following is a 485-amino-acid chain: Glutamyl-tRNA(Gln) amidotransferase subunit A (485 aa).

Active-site charge relay system residues include lysine 79 and serine 154. Serine 178 (acyl-ester intermediate) is an active-site residue.

Belongs to the amidase family. GatA subfamily. In terms of assembly, heterotrimer of A, B and C subunits.

It carries out the reaction L-glutamyl-tRNA(Gln) + L-glutamine + ATP + H2O = L-glutaminyl-tRNA(Gln) + L-glutamate + ADP + phosphate + H(+). Functionally, allows the formation of correctly charged Gln-tRNA(Gln) through the transamidation of misacylated Glu-tRNA(Gln) in organisms which lack glutaminyl-tRNA synthetase. The reaction takes place in the presence of glutamine and ATP through an activated gamma-phospho-Glu-tRNA(Gln). This chain is Glutamyl-tRNA(Gln) amidotransferase subunit A, found in Staphylococcus epidermidis (strain ATCC 12228 / FDA PCI 1200).